Consider the following 329-residue polypeptide: Mitochondrial glycine transporter (329 aa).

Solcar repeat units lie at residues 19–103 (SKTT…LRQP), 130–214 (LSNW…LKRH), and 232–316 (SSSS…LILR). 6 helical membrane passes run 25 to 50 (FAAGLCSGLTSSILLQPADLLKTRVQ), 78 to 104 (GTLPSALRTGFGSALYFTTLNALRQPL), 136 to 161 (LGTGAVARVAAGFVMMPVTVIKVRYE), 189 to 212 (GFGATAARDAPYAGLYVLFYEQLK), 236 to 262 (INFISGGLAAGLATTITNPFDAVKTRL), and 291 to 309 (GLGLRITRKALSSALAWTV).

It belongs to the mitochondrial carrier (TC 2.A.29) family. SLC25A38 subfamily.

Its subcellular location is the mitochondrion inner membrane. It catalyses the reaction glycine(in) = glycine(out). Its function is as follows. Mitochondrial glycine transporter that imports glycine into the mitochondrial matrix. Plays an important role in providing glycine for the first enzymatic step in heme biosynthesis, the condensation of glycine with succinyl-CoA to produce 5-aminolevulinate (ALA) in the mitochondrial matrix. This is Mitochondrial glycine transporter from Aspergillus terreus (strain NIH 2624 / FGSC A1156).